The chain runs to 506 residues: 2-isopropylmalate synthase (506 aa).

The Pyruvate carboxyltransferase domain occupies 4–266 (ILFMDTTLRD…EPSMTLKEIK (263 aa)). 4 residues coordinate Mn(2+): Asp-13, His-201, His-203, and Asn-237. Residues 390–506 (NITQLQVHFV…KLKSFIQLVK (117 aa)) are regulatory domain.

The protein belongs to the alpha-IPM synthase/homocitrate synthase family. LeuA type 1 subfamily. In terms of assembly, homodimer. Requires Mn(2+) as cofactor.

It is found in the cytoplasm. It carries out the reaction 3-methyl-2-oxobutanoate + acetyl-CoA + H2O = (2S)-2-isopropylmalate + CoA + H(+). Its pathway is amino-acid biosynthesis; L-leucine biosynthesis; L-leucine from 3-methyl-2-oxobutanoate: step 1/4. Its function is as follows. Catalyzes the condensation of the acetyl group of acetyl-CoA with 3-methyl-2-oxobutanoate (2-ketoisovalerate) to form 3-carboxy-3-hydroxy-4-methylpentanoate (2-isopropylmalate). This chain is 2-isopropylmalate synthase, found in Bacillus cereus (strain 03BB102).